Reading from the N-terminus, the 449-residue chain is Putative BTB/POZ domain-containing protein L742 (449 aa).

The BTB domain maps to 79–148 (EDGYVYINIG…LTMSNQELSG (70 aa)).

It belongs to the mimivirus BTB/WD family.

The chain is Putative BTB/POZ domain-containing protein L742 from Acanthamoeba polyphaga mimivirus (APMV).